A 263-amino-acid chain; its full sequence is UPF0758 protein Pden_2304 (263 aa).

The MPN domain maps to 141-263; sequence VLTSWDALLD…ELSFRSEGLL (123 aa). Residues His212, His214, and Asp225 each contribute to the Zn(2+) site. The JAMM motif motif lies at 212-225; sequence HNHPSGDPTPSQAD.

Belongs to the UPF0758 family.

In Paracoccus denitrificans (strain Pd 1222), this protein is UPF0758 protein Pden_2304.